Reading from the N-terminus, the 1263-residue chain is DNA-directed RNA polymerase subunit beta (1263 aa).

It belongs to the RNA polymerase beta chain family. The RNAP catalytic core consists of 2 alpha, 1 beta, 1 beta' and 1 omega subunit. When a sigma factor is associated with the core the holoenzyme is formed, which can initiate transcription.

It catalyses the reaction RNA(n) + a ribonucleoside 5'-triphosphate = RNA(n+1) + diphosphate. DNA-dependent RNA polymerase catalyzes the transcription of DNA into RNA using the four ribonucleoside triphosphates as substrates. This Thermotoga petrophila (strain ATCC BAA-488 / DSM 13995 / JCM 10881 / RKU-1) protein is DNA-directed RNA polymerase subunit beta.